The following is a 341-amino-acid chain: NADH-quinone oxidoreductase subunit H 2 (341 aa).

8 helical membrane passes run 13 to 33, 82 to 102, 115 to 135, 161 to 181, 190 to 210, 242 to 262, 277 to 297, and 317 to 337; these read IVVI…IAYI, GVFL…WAVI, VGVL…IMAG, IGFV…TAIV, VLGW…VSAL, LFVL…TILF, WVPG…MFAM, and VFLP…QFAG.

This sequence belongs to the complex I subunit 1 family. NDH-1 is composed of 14 different subunits. Subunits NuoA, H, J, K, L, M, N constitute the membrane sector of the complex.

It localises to the cell inner membrane. The catalysed reaction is a quinone + NADH + 5 H(+)(in) = a quinol + NAD(+) + 4 H(+)(out). NDH-1 shuttles electrons from NADH, via FMN and iron-sulfur (Fe-S) centers, to quinones in the respiratory chain. The immediate electron acceptor for the enzyme in this species is believed to be ubiquinone. Couples the redox reaction to proton translocation (for every two electrons transferred, four hydrogen ions are translocated across the cytoplasmic membrane), and thus conserves the redox energy in a proton gradient. This subunit may bind ubiquinone. The chain is NADH-quinone oxidoreductase subunit H 2 from Rhodopseudomonas palustris (strain HaA2).